We begin with the raw amino-acid sequence, 68 residues long: DNA-directed RNA polymerase subunit omega (68 aa).

This sequence belongs to the RNA polymerase subunit omega family. The RNAP catalytic core consists of 2 alpha, 1 beta, 1 beta' and 1 omega subunit. When a sigma factor is associated with the core the holoenzyme is formed, which can initiate transcription.

It carries out the reaction RNA(n) + a ribonucleoside 5'-triphosphate = RNA(n+1) + diphosphate. Its function is as follows. Promotes RNA polymerase assembly. Latches the N- and C-terminal regions of the beta' subunit thereby facilitating its interaction with the beta and alpha subunits. This Sulfurovum sp. (strain NBC37-1) protein is DNA-directed RNA polymerase subunit omega.